A 30-amino-acid polypeptide reads, in one-letter code: Brevinin-2PTa (30 aa).

Cysteines 24 and 30 form a disulfide.

In terms of tissue distribution, expressed by the skin glands.

The protein localises to the secreted. In terms of biological role, has antibacterial activity against the Gram-positive bacterium S.aureus ATCC 25923 (MIC=18 uM) and the Gram-negative bacterium E.coli ATCC 25726 (MIC=18 uM). This chain is Brevinin-2PTa, found in Pulchrana picturata (Malaysian fire frog).